The primary structure comprises 182 residues: MQTEHVILLNAQGVPTGTLEKYAAHTADTRLHLAFSSWLFNAKGQLLVTRRALSKKAWPGVWTNSVCGHPQLGESNEDAVIRRCRYELGVEITPPESIYPDFRYRATDPSGIVENEVCPVFAARTTSALQINDDEVMDYQWCDLADVLHGIDATPWAFSPWMVMQATNREARKRLSAFTQLK.

The Mn(2+) site is built by histidine 25 and histidine 32. Residue cysteine 67 is part of the active site. Residue histidine 69 coordinates Mn(2+). A Mg(2+)-binding site is contributed by glutamate 87. The Mn(2+) site is built by glutamate 114 and glutamate 116. Glutamate 116 is an active-site residue.

This sequence belongs to the IPP isomerase type 1 family. As to quaternary structure, homodimer. Requires Mg(2+) as cofactor. The cofactor is Mn(2+).

It is found in the cytoplasm. It catalyses the reaction isopentenyl diphosphate = dimethylallyl diphosphate. Its pathway is isoprenoid biosynthesis; dimethylallyl diphosphate biosynthesis; dimethylallyl diphosphate from isopentenyl diphosphate: step 1/1. Catalyzes the 1,3-allylic rearrangement of the homoallylic substrate isopentenyl (IPP) to its highly electrophilic allylic isomer, dimethylallyl diphosphate (DMAPP). The chain is Isopentenyl-diphosphate Delta-isomerase from Escherichia coli (strain K12 / MC4100 / BW2952).